A 425-amino-acid chain; its full sequence is Tol-Pal system protein TolB (425 aa).

Positions 1–22 (MRNFLYCTGVLLLLWMSTSSQA) are cleaved as a signal peptide.

The protein belongs to the TolB family. In terms of assembly, the Tol-Pal system is composed of five core proteins: the inner membrane proteins TolA, TolQ and TolR, the periplasmic protein TolB and the outer membrane protein Pal. They form a network linking the inner and outer membranes and the peptidoglycan layer.

Its subcellular location is the periplasm. Its function is as follows. Part of the Tol-Pal system, which plays a role in outer membrane invagination during cell division and is important for maintaining outer membrane integrity. This Nitrosomonas europaea (strain ATCC 19718 / CIP 103999 / KCTC 2705 / NBRC 14298) protein is Tol-Pal system protein TolB.